A 463-amino-acid chain; its full sequence is tRNA modification GTPase MnmE (463 aa).

3 residues coordinate (6S)-5-formyl-5,6,7,8-tetrahydrofolate: arginine 26, glutamate 88, and arginine 127. In terms of domain architecture, TrmE-type G spans 224–383; it reads GLATAIIGRP…LEQRIAKMFF (160 aa). Asparagine 234 is a binding site for K(+). Residues 234–239, 253–259, and 278–281 contribute to the GTP site; these read NVGKSS, TDVAGTT, and DTAG. Residue serine 238 coordinates Mg(2+). K(+)-binding residues include threonine 253, valine 255, and threonine 258. Threonine 259 lines the Mg(2+) pocket. Lysine 463 is a binding site for (6S)-5-formyl-5,6,7,8-tetrahydrofolate.

This sequence belongs to the TRAFAC class TrmE-Era-EngA-EngB-Septin-like GTPase superfamily. TrmE GTPase family. As to quaternary structure, homodimer. Heterotetramer of two MnmE and two MnmG subunits. Requires K(+) as cofactor.

It localises to the cytoplasm. In terms of biological role, exhibits a very high intrinsic GTPase hydrolysis rate. Involved in the addition of a carboxymethylaminomethyl (cmnm) group at the wobble position (U34) of certain tRNAs, forming tRNA-cmnm(5)s(2)U34. The protein is tRNA modification GTPase MnmE of Lactiplantibacillus plantarum (strain ATCC BAA-793 / NCIMB 8826 / WCFS1) (Lactobacillus plantarum).